A 236-amino-acid polypeptide reads, in one-letter code: uncharacterized protein (236 aa).

The region spanning 3-208 is the DPCK domain; it reads ILGLTGSIAT…PSYFFTLLCL (206 aa). 8–15 contacts ATP; it reads GSIATGKS. 2 positions are modified to phosphoserine: serine 82 and serine 86.

It belongs to the CoaE family.

It localises to the cytoplasm. This is an uncharacterized protein from Schizosaccharomyces pombe (strain 972 / ATCC 24843) (Fission yeast).